A 392-amino-acid chain; its full sequence is Formate-dependent phosphoribosylglycinamide formyltransferase (392 aa).

N(1)-(5-phospho-beta-D-ribosyl)glycinamide-binding positions include 15 to 16 (EL) and Glu-75. Residues Arg-107, Lys-148, 153–158 (SSGKGQ), 188–191 (EEFL), and Glu-196 contribute to the ATP site. An ATP-grasp domain is found at 112–302 (DLASGELGLH…EFELHLRAVL (191 aa)). Mg(2+) is bound by residues Glu-261 and Glu-273. N(1)-(5-phospho-beta-D-ribosyl)glycinamide is bound by residues Asp-280, Lys-350, and 357–358 (RR).

Belongs to the PurK/PurT family. As to quaternary structure, homodimer.

It carries out the reaction N(1)-(5-phospho-beta-D-ribosyl)glycinamide + formate + ATP = N(2)-formyl-N(1)-(5-phospho-beta-D-ribosyl)glycinamide + ADP + phosphate + H(+). It participates in purine metabolism; IMP biosynthesis via de novo pathway; N(2)-formyl-N(1)-(5-phospho-D-ribosyl)glycinamide from N(1)-(5-phospho-D-ribosyl)glycinamide (formate route): step 1/1. Its function is as follows. Involved in the de novo purine biosynthesis. Catalyzes the transfer of formate to 5-phospho-ribosyl-glycinamide (GAR), producing 5-phospho-ribosyl-N-formylglycinamide (FGAR). Formate is provided by PurU via hydrolysis of 10-formyl-tetrahydrofolate. The sequence is that of Formate-dependent phosphoribosylglycinamide formyltransferase from Synechococcus sp. (strain CC9902).